The sequence spans 202 residues: MNKINESQLEMDEISKKELHESIIESLLFVSGEPLKLKQISAILECTTKRAQEVLNNMMLKYNDNCRGVKLININDSYQLVTKNENSDYVRKLLKTNTRQALSQAALETLAIIAYKQPITRIDVDEIRGVKSDRAILTLQEKKLIQECGRLDVPGRPILYETTDEFLKNFNLGNIDELPPMEQIASELDEVAVDEEVKEGTE.

It belongs to the ScpB family. Homodimer. Homodimerization may be required to stabilize the binding of ScpA to the Smc head domains. Component of a cohesin-like complex composed of ScpA, ScpB and the Smc homodimer, in which ScpA and ScpB bind to the head domain of Smc. The presence of the three proteins is required for the association of the complex with DNA.

The protein localises to the cytoplasm. In terms of biological role, participates in chromosomal partition during cell division. May act via the formation of a condensin-like complex containing Smc and ScpA that pull DNA away from mid-cell into both cell halves. The sequence is that of Segregation and condensation protein B from Clostridium acetobutylicum (strain ATCC 824 / DSM 792 / JCM 1419 / IAM 19013 / LMG 5710 / NBRC 13948 / NRRL B-527 / VKM B-1787 / 2291 / W).